The chain runs to 621 residues: 2-hydroxyacyl-CoA lyase 2 (621 aa).

Residues 7–29 (LGCSLGAALGGVIFASYKLGLLY) form a helical membrane-spanning segment. Residue E87 coordinates thiamine diphosphate. The thiamine pyrophosphate binding stretch occupies residues 459–539 (DFVGSAAYIM…VIALVGNDAC (81 aa)). Mg(2+) is bound by residues D510 and N536.

Belongs to the TPP enzyme family. Requires Mg(2+) as cofactor. Thiamine diphosphate is required as a cofactor.

The protein localises to the endoplasmic reticulum membrane. The catalysed reaction is 2-hydroxyoctadecanoyl-CoA = heptadecanal + formyl-CoA. The enzyme catalyses (2R)-hydroxyhexadecanoyl-CoA = pentadecanal + formyl-CoA. Functionally, endoplasmic reticulum 2-OH acyl-CoA lyase involved in the cleavage (C1 removal) reaction in the fatty acid alpha-oxydation in a thiamine pyrophosphate (TPP)-dependent manner. The protein is 2-hydroxyacyl-CoA lyase 2 (ilvbl) of Danio rerio (Zebrafish).